Reading from the N-terminus, the 296-residue chain is N-acetylmuramic acid 6-phosphate etherase (296 aa).

The SIS domain maps to 54–217; the sequence is VTESFRKGGR…STTSMVGIGK (164 aa). E82 serves as the catalytic Proton donor. E113 is a catalytic residue.

Belongs to the GCKR-like family. MurNAc-6-P etherase subfamily. Homodimer.

It carries out the reaction N-acetyl-D-muramate 6-phosphate + H2O = N-acetyl-D-glucosamine 6-phosphate + (R)-lactate. The protein operates within amino-sugar metabolism; N-acetylmuramate degradation. Its function is as follows. Specifically catalyzes the cleavage of the D-lactyl ether substituent of MurNAc 6-phosphate, producing GlcNAc 6-phosphate and D-lactate. This chain is N-acetylmuramic acid 6-phosphate etherase, found in Listeria welshimeri serovar 6b (strain ATCC 35897 / DSM 20650 / CCUG 15529 / CIP 8149 / NCTC 11857 / SLCC 5334 / V8).